A 495-amino-acid polypeptide reads, in one-letter code: Taxoid 2-alpha-hydroxylase (495 aa).

The chain crosses the membrane as a helical span at residues 17 to 37 (LQSSAILLTVVSGIIVIVILL). Cysteine 441 contributes to the heme binding site.

The protein belongs to the cytochrome P450 family.

Its subcellular location is the microsome membrane. The enzyme catalyses taxusin + reduced [NADPH--hemoprotein reductase] + O2 = 2alpha-hydroxytaxusin + oxidized [NADPH--hemoprotein reductase] + H2O + H(+). It catalyses the reaction 7beta-hydroxytaxusin + reduced [NADPH--hemoprotein reductase] + O2 = 2alpha,7beta-dihydroxytaxusin + oxidized [NADPH--hemoprotein reductase] + H2O + H(+). The protein operates within alkaloid biosynthesis; taxol biosynthesis. Its function is as follows. Catalyzes the conversion of taxusin to 2-alpha-hydroxytaxusin in taxol biosynthesis. Catalyzes the conversion of 7-beta-hydroxytaxusin to 2-alpha-7-beta-hydroxytaxusin in taxol biosynthesis. This chain is Taxoid 2-alpha-hydroxylase, found in Taxus canadensis (Canadian yew).